We begin with the raw amino-acid sequence, 595 residues long: Solute carrier family 13 member 1 (595 aa).

The next 5 helical transmembrane spans lie at 13–33 (FLFV…LHTK), 41–61 (LFVV…TALL), 77–97 (VASA…CLAT), 108–128 (IALK…LGFM), and 131–151 (TAFL…MPIA). 2 N-linked (GlcNAc...) asparagine glycosylation sites follow: N174 and N207. 8 helical membrane passes run 239–259 (LTCL…ITGT), 290–310 (PAAL…FLGF), 348–368 (IVTL…DPGF), 381–401 (GFAT…LIPA), 464–484 (PLGS…VTSL), 491–511 (PATI…IHVN), 512–532 (PLYI…LPVA), and 554–574 (GLGV…TWIV). N591 carries N-linked (GlcNAc...) asparagine glycosylation.

Belongs to the SLC13A/DASS transporter (TC 2.A.47) family. NADC subfamily. In terms of tissue distribution, highly expressed in kidney; not detectable in the other tissues tested.

The protein localises to the apical cell membrane. It carries out the reaction sulfate(out) + 3 Na(+)(out) = sulfate(in) + 3 Na(+)(in). It catalyses the reaction selenate(out) + 3 Na(+)(out) = selenate(in) + 3 Na(+)(in). The catalysed reaction is thiosulfate(out) + 3 Na(+)(out) = thiosulfate(in) + 3 Na(+)(in). Inhibited by thiosulfate, selenate, molybdate, tungstate, citrate and succinate. In terms of biological role, sodium:sulfate symporter that mediates sulfate reabsorption in the kidney and small intestine. Can also mediate the transport of selenate and thiosulfate. In Homo sapiens (Human), this protein is Solute carrier family 13 member 1 (SLC13A1).